The sequence spans 140 residues: Ribosome-binding factor A (140 aa).

Positions 118–133 (DEAKQQKHNGKDKTDT) are enriched in basic and acidic residues. Residues 118–140 (DEAKQQKHNGKDKTDTADSEGEE) form a disordered region.

Belongs to the RbfA family. In terms of assembly, monomer. Binds 30S ribosomal subunits, but not 50S ribosomal subunits or 70S ribosomes.

It is found in the cytoplasm. Its function is as follows. One of several proteins that assist in the late maturation steps of the functional core of the 30S ribosomal subunit. Associates with free 30S ribosomal subunits (but not with 30S subunits that are part of 70S ribosomes or polysomes). Required for efficient processing of 16S rRNA. May interact with the 5'-terminal helix region of 16S rRNA. The polypeptide is Ribosome-binding factor A (Shewanella woodyi (strain ATCC 51908 / MS32)).